The sequence spans 330 residues: Protein RecA (330 aa).

An ATP-binding site is contributed by 66 to 73 (GPESSGKT).

This sequence belongs to the RecA family.

It localises to the cytoplasm. Can catalyze the hydrolysis of ATP in the presence of single-stranded DNA, the ATP-dependent uptake of single-stranded DNA by duplex DNA, and the ATP-dependent hybridization of homologous single-stranded DNAs. It interacts with LexA causing its activation and leading to its autocatalytic cleavage. The chain is Protein RecA from Bacteroides thetaiotaomicron (strain ATCC 29148 / DSM 2079 / JCM 5827 / CCUG 10774 / NCTC 10582 / VPI-5482 / E50).